We begin with the raw amino-acid sequence, 436 residues long: Methylenetetrahydrofolate--tRNA-(uracil-5-)-methyltransferase TrmFO (436 aa).

9-14 (GAGLAG) serves as a coordination point for FAD.

The protein belongs to the MnmG family. TrmFO subfamily. Requires FAD as cofactor.

The protein localises to the cytoplasm. The enzyme catalyses uridine(54) in tRNA + (6R)-5,10-methylene-5,6,7,8-tetrahydrofolate + NADH + H(+) = 5-methyluridine(54) in tRNA + (6S)-5,6,7,8-tetrahydrofolate + NAD(+). The catalysed reaction is uridine(54) in tRNA + (6R)-5,10-methylene-5,6,7,8-tetrahydrofolate + NADPH + H(+) = 5-methyluridine(54) in tRNA + (6S)-5,6,7,8-tetrahydrofolate + NADP(+). Its function is as follows. Catalyzes the folate-dependent formation of 5-methyl-uridine at position 54 (M-5-U54) in all tRNAs. The chain is Methylenetetrahydrofolate--tRNA-(uracil-5-)-methyltransferase TrmFO from Acetivibrio thermocellus (strain ATCC 27405 / DSM 1237 / JCM 9322 / NBRC 103400 / NCIMB 10682 / NRRL B-4536 / VPI 7372) (Clostridium thermocellum).